Here is a 1183-residue protein sequence, read N- to C-terminus: Translation initiation factor IF-2 (1183 aa).

Disordered stretches follow at residues 65–512 and 540–579; these read SSKN…KVHI and LARP…AMEL. Positions 83-99 are enriched in basic and acidic residues; that stretch reads TQKDQKTEPKKKNHDQT. Residues 100-130 are compositionally biased toward polar residues; that stretch reads ELSQAKLNTLLKPSQTLIKSQGSSQANNQKA. The segment covering 220–229 has biased composition (basic and acidic residues); that stretch reads PKIDIQDKKP. The span at 231–270 shows a compositional bias: polar residues; the sequence is QPNNQKAKTRINQGEISPQKVGQGNIQKIKSQNKQNAPSR. Residues 288-304 show a composition bias toward basic and acidic residues; it reads IRKEKPVNKPHTNEVRN. Polar residues-rich tracts occupy residues 321–336 and 357–367; these read ANRQ…NNRI and NRTTQGQNRPG. Over residues 485-499 the composition is skewed to basic and acidic residues; it reads GRPDWDDSAKLDALR. 2 stretches are compositionally biased toward basic residues: residues 544 to 553 and 560 to 574; these read SKPKVGKRNN and LKKR…RQRR. A tr-type G domain is found at 675 to 847; sequence RRPPVVTVMG…VLLVTEVEDL (173 aa). Residues 684–691 are G1; it reads GHVDHGKT. 684–691 serves as a coordination point for GTP; that stretch reads GHVDHGKT. A G2 region spans residues 709-713; the sequence is GITQH. Residues 734 to 737 form a G3 region; the sequence is DTPG. GTP-binding positions include 734 to 738 and 788 to 791; these read DTPGH and NKID. Residues 788–791 form a G4 region; it reads NKID. The segment at 824–826 is G5; it reads SAI.

Belongs to the TRAFAC class translation factor GTPase superfamily. Classic translation factor GTPase family. IF-2 subfamily.

The protein resides in the cytoplasm. One of the essential components for the initiation of protein synthesis. Protects formylmethionyl-tRNA from spontaneous hydrolysis and promotes its binding to the 30S ribosomal subunits. Also involved in the hydrolysis of GTP during the formation of the 70S ribosomal complex. The chain is Translation initiation factor IF-2 from Prochlorococcus marinus (strain NATL2A).